The chain runs to 160 residues: Prostaglandin E synthase 3 (160 aa).

A CS domain is found at 1 to 90; the sequence is MQPASAKWYD…ESGQSWPRLT (90 aa). K33 carries the post-translational modification N6-acetyllysine. K35 participates in a covalent cross-link: Glycyl lysine isopeptide (Lys-Gly) (interchain with G-Cter in SUMO2). S44 is subject to Phosphoserine. K65 is covalently cross-linked (Glycyl lysine isopeptide (Lys-Gly) (interchain with G-Cter in SUMO2)). Phosphoserine occurs at positions 85, 100, 113, 118, 148, and 151. The interval 124–160 is disordered; the sequence is SEMMNNMGGDEDVDLPEVDGADDDSQDSDDEKMPDLE. Residues 132–153 are compositionally biased toward acidic residues; the sequence is GDEDVDLPEVDGADDDSQDSDD. The PXLE motif signature appears at 157–160; it reads PDLE.

It belongs to the p23/wos2 family. As to quaternary structure, probably forms a complex composed of chaperones HSP90 and HSP70, co-chaperones STIP1/HOP, CDC37, PPP5C, PTGES3/p23, TSC1 and client protein TSC2. Binds to the progesterone receptor. Interacts with TERT; the interaction, together with HSP90AA1, is required for correct assembly and stabilization of the telomerase holoenzyme complex. Interacts (via PXLE motif) with EGLN1/PHD2, recruiting EGLN1/PHD2 to the HSP90 pathway to facilitate HIF alpha proteins hydroxylation. Interacts with HSP90AA1, FLCN, FNIP1 and FNIP2. Post-translationally, proteolytically cleaved by caspase-7 (CASP7) in response to apoptosis, leading to its inactivation. In terms of tissue distribution, detected in testis and ovary, at lower levels in endometrium, myometrium, kidney and lung, and only faintly in spleen, heart and muscle (at protein level). Expressed at high levels in glandular and luminal epithelial cells of the endometrium, but also detected in stromal cells (at protein level).

It localises to the cytoplasm. It carries out the reaction prostaglandin H2 = prostaglandin E2. Its pathway is lipid metabolism; prostaglandin biosynthesis. Cytosolic prostaglandin synthase that catalyzes the oxidoreduction of prostaglandin endoperoxide H2 (PGH2) to prostaglandin E2 (PGE2). Molecular chaperone that localizes to genomic response elements in a hormone-dependent manner and disrupts receptor-mediated transcriptional activation, by promoting disassembly of transcriptional regulatory complexes. Facilitates HIF alpha proteins hydroxylation via interaction with EGLN1/PHD2, leading to recruit EGLN1/PHD2 to the HSP90 pathway. This Bos taurus (Bovine) protein is Prostaglandin E synthase 3 (PTGES3).